A 313-amino-acid chain; its full sequence is Pantothenate synthetase (313 aa).

ATP is bound at residue 43 to 50 (MGALHEGH). His-50 acts as the Proton donor in catalysis. Position 75 (Gln-75) interacts with (R)-pantoate. Beta-alanine is bound at residue Gln-75. 161–164 (GEKD) provides a ligand contact to ATP. Gln-167 provides a ligand contact to (R)-pantoate. ATP is bound by residues Val-190 and 198 to 201 (LSSR).

This sequence belongs to the pantothenate synthetase family. In terms of assembly, homodimer.

Its subcellular location is the cytoplasm. It carries out the reaction (R)-pantoate + beta-alanine + ATP = (R)-pantothenate + AMP + diphosphate + H(+). It participates in cofactor biosynthesis; (R)-pantothenate biosynthesis; (R)-pantothenate from (R)-pantoate and beta-alanine: step 1/1. Its function is as follows. Catalyzes the condensation of pantoate with beta-alanine in an ATP-dependent reaction via a pantoyl-adenylate intermediate. The polypeptide is Pantothenate synthetase (Mycobacterium sp. (strain KMS)).